We begin with the raw amino-acid sequence, 532 residues long: 2,3-bisphosphoglycerate-independent phosphoglycerate mutase (532 aa).

Mn(2+) contacts are provided by D15 and S65. The active-site Phosphoserine intermediate is the S65. Substrate-binding positions include H126, 156–157, R188, R194, 258–261, and K331; these read RD and RPDR. Residues D398, H402, D439, H440, and H457 each contribute to the Mn(2+) site.

It belongs to the BPG-independent phosphoglycerate mutase family. In terms of assembly, monomer. Requires Mn(2+) as cofactor.

It catalyses the reaction (2R)-2-phosphoglycerate = (2R)-3-phosphoglycerate. It participates in carbohydrate degradation; glycolysis; pyruvate from D-glyceraldehyde 3-phosphate: step 3/5. Its function is as follows. Catalyzes the interconversion of 2-phosphoglycerate and 3-phosphoglycerate. This is 2,3-bisphosphoglycerate-independent phosphoglycerate mutase from Nostoc punctiforme (strain ATCC 29133 / PCC 73102).